Consider the following 604-residue polypeptide: Aspartate--tRNA(Asp/Asn) ligase (604 aa).

Glu175 lines the L-aspartate pocket. An aspartate region spans residues 199-202 (QMFK). The L-aspartate site is built by Arg221 and His451. Residue 221–223 (RDE) coordinates ATP. Glu485 is a binding site for ATP. Arg492 contributes to the L-aspartate binding site. Residue 537–540 (GIDR) coordinates ATP.

Belongs to the class-II aminoacyl-tRNA synthetase family. Type 1 subfamily. Homodimer.

It is found in the cytoplasm. The enzyme catalyses tRNA(Asx) + L-aspartate + ATP = L-aspartyl-tRNA(Asx) + AMP + diphosphate. Its function is as follows. Aspartyl-tRNA synthetase with relaxed tRNA specificity since it is able to aspartylate not only its cognate tRNA(Asp) but also tRNA(Asn). Reaction proceeds in two steps: L-aspartate is first activated by ATP to form Asp-AMP and then transferred to the acceptor end of tRNA(Asp/Asn). This Erythrobacter litoralis (strain HTCC2594) protein is Aspartate--tRNA(Asp/Asn) ligase.